A 124-amino-acid chain; its full sequence is Small ribosomal subunit protein eS8 (124 aa).

The span at 1–22 (MQYQGRSKRSKTGARLRPRSKK) shows a compositional bias: basic residues. Disordered stretches follow at residues 1–40 (MQYQ…GEPR) and 102–124 (AGTA…RVDE). The span at 23 to 32 (SKSELGREPT) shows a compositional bias: basic and acidic residues. The segment covering 106 to 124 (RVTSRPGQDGQVNATRVDE) has biased composition (polar residues).

This sequence belongs to the eukaryotic ribosomal protein eS8 family. As to quaternary structure, part of the 30S ribosomal subunit.

The polypeptide is Small ribosomal subunit protein eS8 (Halobacterium salinarum (strain ATCC 29341 / DSM 671 / R1)).